Consider the following 658-residue polypeptide: Trimethylamine N-oxide transport system permease protein TmoV (658 aa).

15 helical membrane-spanning segments follow: residues 20–40, 103–123, 127–147, 153–173, 185–205, 212–232, 273–293, 300–320, 349–369, 420–440, 447–467, 469–489, 517–537, 585–605, and 627–647; these read LGLA…AGLL, IGPI…YYLG, MALL…WDIA, VLVV…ISAW, VLAV…VIFF, GAVA…TLGL, VIML…PGLG, MGSF…LLAV, FLLM…VVPI, FMLS…ALLV, VLAA…RSVI, LYSV…IGVV, IPAI…ILIF, AVGF…AAFI, and FVLG…IMKW. Positions 147–326 constitute an ABC transmembrane type-1 1 domain; it reads AMQTMSVLVV…LLAVTLDRMS (180 aa). Residues 465–644 form the ABC transmembrane type-1 2 domain; that stretch reads SVITLYSVLA…LMALTFDMVI (180 aa).

It belongs to the binding-protein-dependent transport system permease family. In terms of assembly, the complex is probably composed of two ATP-binding proteins (TmoW), two transmembrane proteins (TmoV) and a solute-binding protein (TmoX).

The protein localises to the cell inner membrane. In terms of biological role, part of the ABC transporter complex TmoXWV involved in trimethylamine N-oxide (TMAO) import. Responsible for the translocation of the substrate across the membrane. Is specific for TMAO and essential for TMAO metabolism. This chain is Trimethylamine N-oxide transport system permease protein TmoV, found in Ruegeria pomeroyi (strain ATCC 700808 / DSM 15171 / DSS-3) (Silicibacter pomeroyi).